A 216-amino-acid polypeptide reads, in one-letter code: Penicillin-binding protein activator LpoB (216 aa).

The N-terminal stretch at Met1–Gly20 is a signal peptide. The N-palmitoyl cysteine moiety is linked to residue Cys21. A lipid anchor (S-diacylglycerol cysteine) is attached at Cys21. A disordered region spans residues Gln28–Arg77.

Belongs to the LpoB family. Interacts with PBP1b.

It is found in the cell outer membrane. Regulator of peptidoglycan synthesis that is essential for the function of penicillin-binding protein 1B (PBP1b). This is Penicillin-binding protein activator LpoB from Enterobacter sp. (strain 638).